Consider the following 910-residue polypeptide: DNA mismatch repair protein MutS (910 aa).

607 to 614 (GPNMAGKS) is a binding site for ATP.

It belongs to the DNA mismatch repair MutS family.

This protein is involved in the repair of mismatches in DNA. It is possible that it carries out the mismatch recognition step. This protein has a weak ATPase activity. The polypeptide is DNA mismatch repair protein MutS (Geobacillus thermodenitrificans (strain NG80-2)).